We begin with the raw amino-acid sequence, 552 residues long: Hydroxylamine reductase (552 aa).

Residues cysteine 5, cysteine 8, cysteine 20, and cysteine 27 each contribute to the [2Fe-2S] cluster site. Residues histidine 251, glutamate 275, cysteine 319, cysteine 407, cysteine 435, cysteine 460, glutamate 494, and lysine 496 each coordinate hybrid [4Fe-2O-2S] cluster. Cysteine 407 carries the post-translational modification Cysteine persulfide.

Belongs to the HCP family. It depends on [2Fe-2S] cluster as a cofactor. The cofactor is hybrid [4Fe-2O-2S] cluster.

It is found in the cytoplasm. It carries out the reaction A + NH4(+) + H2O = hydroxylamine + AH2 + H(+). Catalyzes the reduction of hydroxylamine to form NH(3) and H(2)O. In Escherichia coli (strain UTI89 / UPEC), this protein is Hydroxylamine reductase.